Reading from the N-terminus, the 540-residue chain is Putative BTB/POZ domain-containing protein R224 (540 aa).

Residues 16–88 enclose the BTB domain; that stretch reads TDLELTLIDE…FYKNPIKYKN (73 aa). The chain crosses the membrane as a helical span at residues 356 to 376; the sequence is IFVSLLNDIIFVLSSINMYFI.

This sequence belongs to the mimivirus BTB/WD family.

The protein localises to the membrane. The sequence is that of Putative BTB/POZ domain-containing protein R224 from Acanthamoeba polyphaga (Amoeba).